The primary structure comprises 225 residues: ATP-dependent Clp protease proteolytic subunit (225 aa).

The active-site Nucleophile is Ser-123. His-148 is an active-site residue.

Belongs to the peptidase S14 family. In terms of assembly, fourteen ClpP subunits assemble into 2 heptameric rings which stack back to back to give a disk-like structure with a central cavity, resembling the structure of eukaryotic proteasomes.

It is found in the cytoplasm. The enzyme catalyses Hydrolysis of proteins to small peptides in the presence of ATP and magnesium. alpha-casein is the usual test substrate. In the absence of ATP, only oligopeptides shorter than five residues are hydrolyzed (such as succinyl-Leu-Tyr-|-NHMec, and Leu-Tyr-Leu-|-Tyr-Trp, in which cleavage of the -Tyr-|-Leu- and -Tyr-|-Trp bonds also occurs).. Its function is as follows. Cleaves peptides in various proteins in a process that requires ATP hydrolysis. Has a chymotrypsin-like activity. Plays a major role in the degradation of misfolded proteins. The chain is ATP-dependent Clp protease proteolytic subunit from Chlorobium phaeovibrioides (strain DSM 265 / 1930) (Prosthecochloris vibrioformis (strain DSM 265)).